The primary structure comprises 129 residues: Glycine cleavage system H protein (129 aa).

The Lipoyl-binding domain occupies 24–106 (TYTVGITEHA…YAGGWIFKIK (83 aa)). K65 carries the N6-lipoyllysine modification.

It belongs to the GcvH family. As to quaternary structure, the glycine cleavage system is composed of four proteins: P, T, L and H. Requires (R)-lipoate as cofactor.

Its function is as follows. The glycine cleavage system catalyzes the degradation of glycine. The H protein shuttles the methylamine group of glycine from the P protein to the T protein. In Citrobacter koseri (strain ATCC BAA-895 / CDC 4225-83 / SGSC4696), this protein is Glycine cleavage system H protein.